Here is a 225-residue protein sequence, read N- to C-terminus: Pyridoxine/pyridoxamine 5'-phosphate oxidase (225 aa).

Residues 21–24 (RKSY) and lysine 79 contribute to the substrate site. Residues 74 to 79 (RVVLIK), 89 to 90 (YT), arginine 95, and lysine 96 each bind FMN. 3 residues coordinate substrate: tyrosine 136, arginine 140, and serine 144. FMN is bound by residues 153 to 154 (QS) and tryptophan 197. Residue 203–205 (RLH) coordinates substrate. Arginine 207 provides a ligand contact to FMN.

This sequence belongs to the pyridoxamine 5'-phosphate oxidase family. Homodimer. It depends on FMN as a cofactor.

The enzyme catalyses pyridoxamine 5'-phosphate + O2 + H2O = pyridoxal 5'-phosphate + H2O2 + NH4(+). It catalyses the reaction pyridoxine 5'-phosphate + O2 = pyridoxal 5'-phosphate + H2O2. It functions in the pathway cofactor metabolism; pyridoxal 5'-phosphate salvage; pyridoxal 5'-phosphate from pyridoxamine 5'-phosphate: step 1/1. The protein operates within cofactor metabolism; pyridoxal 5'-phosphate salvage; pyridoxal 5'-phosphate from pyridoxine 5'-phosphate: step 1/1. Functionally, catalyzes the oxidation of either pyridoxine 5'-phosphate (PNP) or pyridoxamine 5'-phosphate (PMP) into pyridoxal 5'-phosphate (PLP). In Paracidovorax citrulli (strain AAC00-1) (Acidovorax citrulli), this protein is Pyridoxine/pyridoxamine 5'-phosphate oxidase.